Here is a 295-residue protein sequence, read N- to C-terminus: Ribosomal RNA small subunit methyltransferase A (295 aa).

S-adenosyl-L-methionine contacts are provided by asparagine 33, valine 35, glycine 60, glutamate 81, aspartate 111, and asparagine 129.

Belongs to the class I-like SAM-binding methyltransferase superfamily. rRNA adenine N(6)-methyltransferase family. RsmA subfamily.

Its subcellular location is the cytoplasm. The enzyme catalyses adenosine(1518)/adenosine(1519) in 16S rRNA + 4 S-adenosyl-L-methionine = N(6)-dimethyladenosine(1518)/N(6)-dimethyladenosine(1519) in 16S rRNA + 4 S-adenosyl-L-homocysteine + 4 H(+). In terms of biological role, specifically dimethylates two adjacent adenosines (A1518 and A1519) in the loop of a conserved hairpin near the 3'-end of 16S rRNA in the 30S particle. May play a critical role in biogenesis of 30S subunits. This is Ribosomal RNA small subunit methyltransferase A from Streptomyces avermitilis (strain ATCC 31267 / DSM 46492 / JCM 5070 / NBRC 14893 / NCIMB 12804 / NRRL 8165 / MA-4680).